The chain runs to 126 residues: Small ribosomal subunit protein eS6 (126 aa).

This sequence belongs to the eukaryotic ribosomal protein eS6 family.

This is Small ribosomal subunit protein eS6 from Methanothermobacter thermautotrophicus (strain ATCC 29096 / DSM 1053 / JCM 10044 / NBRC 100330 / Delta H) (Methanobacterium thermoautotrophicum).